Consider the following 62-residue polypeptide: Large ribosomal subunit protein bL28 (62 aa).

The protein belongs to the bacterial ribosomal protein bL28 family.

This chain is Large ribosomal subunit protein bL28, found in Carboxydothermus hydrogenoformans (strain ATCC BAA-161 / DSM 6008 / Z-2901).